The sequence spans 92 residues: Small ribosomal subunit protein bS18B (92 aa).

Belongs to the bacterial ribosomal protein bS18 family. Part of the 30S ribosomal subunit. Forms a tight heterodimer with protein bS6.

Binds as a heterodimer with protein bS6 to the central domain of the 16S rRNA, where it helps stabilize the platform of the 30S subunit. This Cupriavidus pinatubonensis (strain JMP 134 / LMG 1197) (Cupriavidus necator (strain JMP 134)) protein is Small ribosomal subunit protein bS18B.